Here is a 276-residue protein sequence, read N- to C-terminus: MAAGFKTVEPLEYYRRFLKENCRPDGRELGEFRTTTVNIGSISTADGSALVKLGNTTVICGVKAEFAAPSTDAPDKGYVVPNVDLPPLCSSRFRSGPPGEEAQVASQFIADVIENSQIIQKEDLCISPGKLVWVLYCDLICLDYDGNILDACTFALLAALKNVQLPEVTINEETALAEVNLKKKSYLNIRTHPVATSFAVFDDTLLIVDPTGEEEHLATGTLTIVMDEEGKLCCLHKPGGSGLTGAKLQDCMSRAVTRHKEVKKLMDEVIKSMKPK.

Position 2 is an N-acetylalanine (alanine 2).

Belongs to the RNase PH family. In terms of assembly, component of the RNA exosome core complex (Exo-9), composed of EXOSC1, EXOSC2, EXOSC3, EXOSC4, EXOSC5, EXOSC6, EXOSC7, EXOSC8 and EXOSC9; within the complex interacts with EXOSC5 and EXOSC6. The catalytically inactive RNA exosome core complex (Exo-9) associates with the catalytic subunit EXOSC10/RRP6. Exo-9 may associate with DIS3 to form the nucleolar exosome complex, or DIS3L to form the cytoplasmic exosome complex. Exo-9 is formed by a hexameric base ring consisting of the heterodimers EXOSC4-EXOSC9, EXOSC5-EXOSC8 and EXOSC6-EXOSC7, and a cap ring consisting of EXOSC1, EXOSC2 and EXOSC3. The RNA exosome complex associates with cofactors C1D/RRP47, MPHOSPH6/MPP6 and MTREX/MTR4. Binds outer membrane protein opap from Neisseria gonorrhoeae.

The protein resides in the cytoplasm. Its subcellular location is the nucleus. It is found in the nucleolus. Functionally, non-catalytic component of the RNA exosome complex which has 3'-&gt;5' exoribonuclease activity and participates in a multitude of cellular RNA processing and degradation events. In the nucleus, the RNA exosome complex is involved in proper maturation of stable RNA species such as rRNA, snRNA and snoRNA, in the elimination of RNA processing by-products and non-coding 'pervasive' transcripts, such as antisense RNA species and promoter-upstream transcripts (PROMPTs), and of mRNAs with processing defects, thereby limiting or excluding their export to the cytoplasm. The RNA exosome may be involved in Ig class switch recombination (CSR) and/or Ig variable region somatic hypermutation (SHM) by targeting AICDA deamination activity to transcribed dsDNA substrates. In the cytoplasm, the RNA exosome complex is involved in general mRNA turnover and specifically degrades inherently unstable mRNAs containing AU-rich elements (AREs) within their 3' untranslated regions, and in RNA surveillance pathways, preventing translation of aberrant mRNAs. It seems to be involved in degradation of histone mRNA. The catalytic inactive RNA exosome core complex of 9 subunits (Exo-9) is proposed to play a pivotal role in the binding and presentation of RNA for ribonucleolysis, and to serve as a scaffold for the association with catalytic subunits and accessory proteins or complexes. EXOSC8 binds to ARE-containing RNAs. This chain is Exosome complex component RRP43 (EXOSC8), found in Homo sapiens (Human).